A 248-amino-acid polypeptide reads, in one-letter code: Transcriptional activator protein FnrL (248 aa).

In terms of domain architecture, HTH crp-type spans 154–232; the sequence is KTAREKIASL…KRHVIVTDFA (79 aa). The H-T-H motif DNA-binding region spans 191–210; the sequence is REEMADYLGLTLETVSRQVS.

Functionally, anaerobic regulatory protein; transcriptional activator of hemA. Appears to regulate other genes. The chain is Transcriptional activator protein FnrL (fnrL) from Cereibacter sphaeroides (strain ATCC 17023 / DSM 158 / JCM 6121 / CCUG 31486 / LMG 2827 / NBRC 12203 / NCIMB 8253 / ATH 2.4.1.) (Rhodobacter sphaeroides).